A 470-amino-acid polypeptide reads, in one-letter code: Coproporphyrinogen III oxidase (470 aa).

FAD contacts are provided by residues G12–G17, E41–A42, K49, G63–S66, V256, W409, and V448–I450.

This sequence belongs to the protoporphyrinogen/coproporphyrinogen oxidase family. Coproporphyrinogen III oxidase subfamily. Monomer. FAD is required as a cofactor.

The protein localises to the cytoplasm. It localises to the cell membrane. It catalyses the reaction coproporphyrinogen III + 3 O2 = coproporphyrin III + 3 H2O2. It functions in the pathway porphyrin-containing compound metabolism; protoheme biosynthesis. Its activity is regulated as follows. Only weakly inhibited by acifluorfen, in contrast to eukaryotic family members. Weakly inhibited by methylacifluorfen. Bilirubin, biliverdin and hemin are all competitive inhibitors. Functionally, involved in coproporphyrin-dependent heme b biosynthesis. Catalyzes the oxidation of coproporphyrinogen III to coproporphyrin III. Can also oxidize protoporphyrinogen IX to protoporphyrin-IX. The specific activity for the oxidation of coproporphyrinogen III is much higher than that for the oxidation of protoporphyrinogen IX. Can also oxidize mesoporphyrinogen IX, but not uroporphyrinogen III. The sequence is that of Coproporphyrinogen III oxidase from Bacillus subtilis (strain 168).